A 531-amino-acid chain; its full sequence is MGSLNTEDVLENSSAFGVTNPLDPEEFRRQGHMIIDFLADYYRDVEKYPVRSQVEPGYLRKRLPETAPYNPESIETILQDVTTEIIPGLTHWQSPNYYAYFPSSGSVAGFLGEMLSTGFNVVGFNWMSSPAATELESVVMDWFGKMLNLPESFLFSGSGGGVLQGTSCEAILCTLTAARDRKLNKIGREHIGRLVVYGSDQTHCALQKAAQVAGINPKNFRAIKTFKENSFGLSAATLREVILEDIEAGLIPLFVCPTVGTTSSTAVDPISPICEVAKEYEMWVHVDAAYAGSACICPEFRHFIDGVEEADSFSLNAHKWFFTTLDCCCLWVKDPSALVKALSTNPEYLRNKATESRQVVDYKDWQIALSRRFRSLKLWMVLRSYGVTNLRNFLRSHVKMAKTFEGLICMDGRFEITVPRTFAMVCFRLLPPKTIKVYDNGVHQNGNGVVPLRDENENLVLANKLNQVYLETVNATGSVYMTHAVVGGVYMIRFAVGSTLTEERHVIYAWKILQEHADLILGKFSEADFSS.

Residue Lys-319 is modified to N6-(pyridoxal phosphate)lysine.

Belongs to the group II decarboxylase family. In terms of assembly, homodimer. Pyridoxal 5'-phosphate serves as cofactor. In terms of tissue distribution, predominantly expressed in the roots and stems, while a lower level expression is seen in the sepals and carpels of fully expanded flowers.

It catalyses the reaction L-tyrosine + H(+) = tyramine + CO2. It carries out the reaction L-dopa + H(+) = dopamine + CO2. The catalysed reaction is 5-hydroxy-L-tryptophan + H(+) = serotonin + CO2. In terms of biological role, marginally higher substrate specificity for L-DOPA over L-tyrosine. The polypeptide is Tyrosine/DOPA decarboxylase 2 (TYDC2) (Papaver somniferum (Opium poppy)).